Here is a 196-residue protein sequence, read N- to C-terminus: C-type lectin domain family 2 member F (196 aa).

The segment at 1-21 is disordered; sequence MNAQCLKKPEEGESSPGTGDK. Over 1-41 the chain is Cytoplasmic; that stretch reads MNAQCLKKPEEGESSPGTGDKILQRNSLRAISPESSAKLYC. The helical; Signal-anchor for type II membrane protein transmembrane segment at 42–62 threads the bilayer; sequence CCGVIMVLTVAVVALSVALPA. Over 63 to 196 the chain is Extracellular; the sequence is TKTEQILINK…SRSSNYMLQC (134 aa). A disulfide bond links cysteine 77 and cysteine 88. Residues 84 to 187 form the C-type lectin domain; the sequence is VGNKCFYFSE…DYIPRKWICS (104 aa). An N-linked (GlcNAc...) asparagine glycan is attached at asparagine 97. A disulfide bridge links cysteine 105 with cysteine 186.

Its subcellular location is the cell membrane. In terms of biological role, lectin-type cell surface receptor. This is C-type lectin domain family 2 member F (Clec2f) from Mus musculus (Mouse).